The following is a 305-amino-acid chain: UDP-N-acetylenolpyruvoylglucosamine reductase 2 (305 aa).

Residues 33-197 (VGGKADVFVA…LEARFELEEG (165 aa)) form the FAD-binding PCMH-type domain. Residue Arg-176 is part of the active site. Ser-226 acts as the Proton donor in catalysis. Glu-296 is a catalytic residue.

Belongs to the MurB family. Requires FAD as cofactor.

The protein localises to the cytoplasm. It carries out the reaction UDP-N-acetyl-alpha-D-muramate + NADP(+) = UDP-N-acetyl-3-O-(1-carboxyvinyl)-alpha-D-glucosamine + NADPH + H(+). The protein operates within cell wall biogenesis; peptidoglycan biosynthesis. In terms of biological role, cell wall formation. This chain is UDP-N-acetylenolpyruvoylglucosamine reductase 2, found in Bacillus thuringiensis subsp. konkukian (strain 97-27).